The chain runs to 122 residues: MALPRCHRLRQRDRFPALYRGGRKLSTPSLLLRWLPQAEIESVNESRFAIVISLKVHKRAVRRNRLRRRLQAALLRLRDRLRPGFDGLLTVKPGLDLDTSTSQFLQELEDLLTRAEIIHGRQ.

This sequence belongs to the RnpA family. In terms of assembly, consists of a catalytic RNA component (M1 or rnpB) and a protein subunit.

It catalyses the reaction Endonucleolytic cleavage of RNA, removing 5'-extranucleotides from tRNA precursor.. Functionally, RNaseP catalyzes the removal of the 5'-leader sequence from pre-tRNA to produce the mature 5'-terminus. It can also cleave other RNA substrates such as 4.5S RNA. The protein component plays an auxiliary but essential role in vivo by binding to the 5'-leader sequence and broadening the substrate specificity of the ribozyme. The sequence is that of Ribonuclease P protein component from Synechococcus elongatus (strain ATCC 33912 / PCC 7942 / FACHB-805) (Anacystis nidulans R2).